Consider the following 398-residue polypeptide: RNA exonuclease 3 (398 aa).

Residues 239-385 (VLALDCEMGF…QDAIAAMDII (147 aa)) form the Exonuclease domain.

This sequence belongs to the REXO1/REXO3 family.

The protein resides in the cytoplasm. It localises to the nucleus. 3' to 5' exoribonuclease required for proper 3' end maturation of MRP RNA and of the U5L snRNA. The chain is RNA exonuclease 3 (REX3) from Candida glabrata (strain ATCC 2001 / BCRC 20586 / JCM 3761 / NBRC 0622 / NRRL Y-65 / CBS 138) (Yeast).